Consider the following 92-residue polypeptide: Small ribosomal subunit protein bS20 (92 aa).

The tract at residues 1-24 (MANTTSAKKATRKIARRTDVNKAR) is disordered.

Belongs to the bacterial ribosomal protein bS20 family.

Its function is as follows. Binds directly to 16S ribosomal RNA. In Rhizobium etli (strain ATCC 51251 / DSM 11541 / JCM 21823 / NBRC 15573 / CFN 42), this protein is Small ribosomal subunit protein bS20.